A 228-amino-acid chain; its full sequence is Phosphoribosylformylglycinamidine synthase subunit PurQ (228 aa).

Residues 4-226 (AVVVFPGSNC…VNYWRETHVV (223 aa)) form the Glutamine amidotransferase type-1 domain. C86 acts as the Nucleophile in catalysis. Active-site residues include H195 and E197.

In terms of assembly, part of the FGAM synthase complex composed of 1 PurL, 1 PurQ and 2 PurS subunits.

It localises to the cytoplasm. It carries out the reaction N(2)-formyl-N(1)-(5-phospho-beta-D-ribosyl)glycinamide + L-glutamine + ATP + H2O = 2-formamido-N(1)-(5-O-phospho-beta-D-ribosyl)acetamidine + L-glutamate + ADP + phosphate + H(+). The catalysed reaction is L-glutamine + H2O = L-glutamate + NH4(+). The protein operates within purine metabolism; IMP biosynthesis via de novo pathway; 5-amino-1-(5-phospho-D-ribosyl)imidazole from N(2)-formyl-N(1)-(5-phospho-D-ribosyl)glycinamide: step 1/2. In terms of biological role, part of the phosphoribosylformylglycinamidine synthase complex involved in the purines biosynthetic pathway. Catalyzes the ATP-dependent conversion of formylglycinamide ribonucleotide (FGAR) and glutamine to yield formylglycinamidine ribonucleotide (FGAM) and glutamate. The FGAM synthase complex is composed of three subunits. PurQ produces an ammonia molecule by converting glutamine to glutamate. PurL transfers the ammonia molecule to FGAR to form FGAM in an ATP-dependent manner. PurS interacts with PurQ and PurL and is thought to assist in the transfer of the ammonia molecule from PurQ to PurL. The protein is Phosphoribosylformylglycinamidine synthase subunit PurQ of Geobacillus kaustophilus (strain HTA426).